A 243-amino-acid polypeptide reads, in one-letter code: 5'-methylthioadenosine/S-adenosylhomocysteine nucleosidase (243 aa).

Catalysis depends on Glu-12, which acts as the Proton acceptor. Substrate is bound by residues Gly-78, Met-158, and Met-179 to Glu-180. Residue Asp-203 is the Proton donor of the active site.

Belongs to the PNP/UDP phosphorylase family. MtnN subfamily.

It carries out the reaction S-adenosyl-L-homocysteine + H2O = S-(5-deoxy-D-ribos-5-yl)-L-homocysteine + adenine. The catalysed reaction is S-methyl-5'-thioadenosine + H2O = 5-(methylsulfanyl)-D-ribose + adenine. The enzyme catalyses 5'-deoxyadenosine + H2O = 5-deoxy-D-ribose + adenine. It functions in the pathway amino-acid biosynthesis; L-methionine biosynthesis via salvage pathway; S-methyl-5-thio-alpha-D-ribose 1-phosphate from S-methyl-5'-thioadenosine (hydrolase route): step 1/2. In terms of biological role, catalyzes the irreversible cleavage of the glycosidic bond in both 5'-methylthioadenosine (MTA) and S-adenosylhomocysteine (SAH/AdoHcy) to adenine and the corresponding thioribose, 5'-methylthioribose and S-ribosylhomocysteine, respectively. Also cleaves 5'-deoxyadenosine, a toxic by-product of radical S-adenosylmethionine (SAM) enzymes, into 5-deoxyribose and adenine. This Colwellia psychrerythraea (strain 34H / ATCC BAA-681) (Vibrio psychroerythus) protein is 5'-methylthioadenosine/S-adenosylhomocysteine nucleosidase.